Here is a 283-residue protein sequence, read N- to C-terminus: Cilia- and flagella-associated protein 77 (283 aa).

The segment at 151-170 (DQEDRRQKEPPPIPPNMTFG) is disordered.

The protein belongs to the CFAP77 family. In terms of assembly, microtubule inner protein component of sperm flagellar doublet microtubules.

The protein resides in the cytoplasm. The protein localises to the cytoskeleton. It is found in the cilium axoneme. It localises to the flagellum axoneme. Its function is as follows. Microtubule inner protein (MIP) part of the dynein-decorated doublet microtubules (DMTs) in cilia axoneme, which is required for motile cilia beating. The chain is Cilia- and flagella-associated protein 77 from Mus musculus (Mouse).